The following is a 190-amino-acid chain: ATP synthase subunit delta (190 aa).

This sequence belongs to the ATPase delta chain family. In terms of assembly, F-type ATPases have 2 components, F(1) - the catalytic core - and F(0) - the membrane proton channel. F(1) has five subunits: alpha(3), beta(3), gamma(1), delta(1), epsilon(1). F(0) has three main subunits: a(1), b(2) and c(10-14). The alpha and beta chains form an alternating ring which encloses part of the gamma chain. F(1) is attached to F(0) by a central stalk formed by the gamma and epsilon chains, while a peripheral stalk is formed by the delta and b chains.

The protein resides in the cell inner membrane. In terms of biological role, f(1)F(0) ATP synthase produces ATP from ADP in the presence of a proton or sodium gradient. F-type ATPases consist of two structural domains, F(1) containing the extramembraneous catalytic core and F(0) containing the membrane proton channel, linked together by a central stalk and a peripheral stalk. During catalysis, ATP synthesis in the catalytic domain of F(1) is coupled via a rotary mechanism of the central stalk subunits to proton translocation. Functionally, this protein is part of the stalk that links CF(0) to CF(1). It either transmits conformational changes from CF(0) to CF(1) or is implicated in proton conduction. This Methylobacterium nodulans (strain LMG 21967 / CNCM I-2342 / ORS 2060) protein is ATP synthase subunit delta.